A 153-amino-acid chain; its full sequence is Ubiquitin-conjugating enzyme E2-18 kDa (153 aa).

The region spanning Ala-2 to Glu-149 is the UBC core domain. Catalysis depends on Cys-86, which acts as the Glycyl thioester intermediate.

It belongs to the ubiquitin-conjugating enzyme family.

It carries out the reaction S-ubiquitinyl-[E1 ubiquitin-activating enzyme]-L-cysteine + [E2 ubiquitin-conjugating enzyme]-L-cysteine = [E1 ubiquitin-activating enzyme]-L-cysteine + S-ubiquitinyl-[E2 ubiquitin-conjugating enzyme]-L-cysteine.. Its pathway is protein modification; protein ubiquitination. Functionally, catalyzes the covalent attachment of ubiquitin to other proteins. The sequence is that of Ubiquitin-conjugating enzyme E2-18 kDa (Ubc84D) from Drosophila melanogaster (Fruit fly).